Reading from the N-terminus, the 354-residue chain is Protein RecA (354 aa).

65–72 lines the ATP pocket; it reads GPESSGKT.

The protein belongs to the RecA family.

It is found in the cytoplasm. In terms of biological role, can catalyze the hydrolysis of ATP in the presence of single-stranded DNA, the ATP-dependent uptake of single-stranded DNA by duplex DNA, and the ATP-dependent hybridization of homologous single-stranded DNAs. It interacts with LexA causing its activation and leading to its autocatalytic cleavage. In Pseudomonas syringae pv. syringae (strain B728a), this protein is Protein RecA.